Consider the following 156-residue polypeptide: Small ribosomal subunit protein uS7 (156 aa).

The protein belongs to the universal ribosomal protein uS7 family. In terms of assembly, part of the 30S ribosomal subunit. Contacts proteins S9 and S11.

One of the primary rRNA binding proteins, it binds directly to 16S rRNA where it nucleates assembly of the head domain of the 30S subunit. Is located at the subunit interface close to the decoding center, probably blocks exit of the E-site tRNA. This chain is Small ribosomal subunit protein uS7, found in Pelobacter propionicus (strain DSM 2379 / NBRC 103807 / OttBd1).